A 449-amino-acid polypeptide reads, in one-letter code: Adenylosuccinate synthetase isozyme 1 B (449 aa).

GTP is bound by residues 34-40 (GDEGKGK) and 62-64 (GHT). Asp35 functions as the Proton acceptor in the catalytic mechanism. The Mg(2+) site is built by Asp35 and Gly62. Asp35 provides a ligand contact to substrate. IMP-binding positions include 35–38 (DEGK), 60–63 (NAGH), Thr155, Arg169, Asn248, Thr263, and Arg327. The Proton donor role is filled by His63. Residue 323–329 (VTTGRKR) coordinates substrate. GTP-binding positions include Arg329, 355-357 (KLD), and 437-440 (GVGK).

Belongs to the adenylosuccinate synthetase family. Homodimer. It depends on Mg(2+) as a cofactor.

It is found in the cytoplasm. The enzyme catalyses IMP + L-aspartate + GTP = N(6)-(1,2-dicarboxyethyl)-AMP + GDP + phosphate + 2 H(+). The protein operates within purine metabolism; AMP biosynthesis via de novo pathway; AMP from IMP: step 1/2. Functionally, component of the purine nucleotide cycle (PNC), which interconverts IMP and AMP to regulate the nucleotide levels in various tissues, and which contributes to glycolysis and ammoniagenesis. Catalyzes the first committed step in the biosynthesis of AMP from IMP. In Salmo salar (Atlantic salmon), this protein is Adenylosuccinate synthetase isozyme 1 B (adss1b).